The sequence spans 368 residues: Phospho-N-acetylmuramoyl-pentapeptide-transferase (368 aa).

Transmembrane regions (helical) follow at residues 31–51 (LTSM…LYGL), 73–93 (TMGG…WGNL), 98–118 (VILL…DDYM), 134–154 (FILS…YTGT), 175–195 (GPVI…IIGS), 213–233 (VLIS…PIVA), 249–269 (VFLS…AHPA), 271–291 (VFMG…IVIL), 296–316 (ILLL…ILQV), and 345–365 (KIVI…LSTL).

This sequence belongs to the glycosyltransferase 4 family. MraY subfamily. Mg(2+) is required as a cofactor.

The protein localises to the cell inner membrane. The catalysed reaction is UDP-N-acetyl-alpha-D-muramoyl-L-alanyl-gamma-D-glutamyl-meso-2,6-diaminopimeloyl-D-alanyl-D-alanine + di-trans,octa-cis-undecaprenyl phosphate = di-trans,octa-cis-undecaprenyl diphospho-N-acetyl-alpha-D-muramoyl-L-alanyl-D-glutamyl-meso-2,6-diaminopimeloyl-D-alanyl-D-alanine + UMP. It participates in cell wall biogenesis; peptidoglycan biosynthesis. Catalyzes the initial step of the lipid cycle reactions in the biosynthesis of the cell wall peptidoglycan: transfers peptidoglycan precursor phospho-MurNAc-pentapeptide from UDP-MurNAc-pentapeptide onto the lipid carrier undecaprenyl phosphate, yielding undecaprenyl-pyrophosphoryl-MurNAc-pentapeptide, known as lipid I. The sequence is that of Phospho-N-acetylmuramoyl-pentapeptide-transferase from Leptospira interrogans serogroup Icterohaemorrhagiae serovar copenhageni (strain Fiocruz L1-130).